Reading from the N-terminus, the 534-residue chain is Lariat debranching enzyme (534 aa).

The a divalent metal cation site is built by C8, H10, D39, and N84. The tract at residues 124 to 154 (SGIFKGHDFLRGHHEFPPYTDSTCRSVYHVR) is lariat recognition loop. A divalent metal cation-binding residues include H174, H226, and H228. Disordered stretches follow at residues 242–275 (KLGD…PPPS) and 501–534 (TETP…AQED).

This sequence belongs to the lariat debranching enzyme family. Fe(2+) serves as cofactor. Zn(2+) is required as a cofactor. It depends on Mn(2+) as a cofactor.

Its subcellular location is the nucleus. Active in presence of diverse metals including Fe(2+), Zn(2+), Mn(2+). Binds two metal cations in two adjacent alpha and beta metal-binding pockets. Its function is as follows. Cleaves the 2'-5' phosphodiester linkage at the branch point of lariat intron pre-mRNAs after splicing and converts them into linear molecules that are subsequently degraded. It thereby facilitates ribonucleotide turnover. In Drosophila melanogaster (Fruit fly), this protein is Lariat debranching enzyme (ldbr).